Reading from the N-terminus, the 245-residue chain is 1-(5-phosphoribosyl)-5-[(5-phosphoribosylamino)methylideneamino] imidazole-4-carboxamide isomerase (245 aa).

Catalysis depends on Asp8, which acts as the Proton acceptor. The active-site Proton donor is the Asp130.

The protein belongs to the HisA/HisF family.

Its subcellular location is the cytoplasm. The enzyme catalyses 1-(5-phospho-beta-D-ribosyl)-5-[(5-phospho-beta-D-ribosylamino)methylideneamino]imidazole-4-carboxamide = 5-[(5-phospho-1-deoxy-D-ribulos-1-ylimino)methylamino]-1-(5-phospho-beta-D-ribosyl)imidazole-4-carboxamide. Its pathway is amino-acid biosynthesis; L-histidine biosynthesis; L-histidine from 5-phospho-alpha-D-ribose 1-diphosphate: step 4/9. In Pseudomonas savastanoi pv. phaseolicola (strain 1448A / Race 6) (Pseudomonas syringae pv. phaseolicola (strain 1448A / Race 6)), this protein is 1-(5-phosphoribosyl)-5-[(5-phosphoribosylamino)methylideneamino] imidazole-4-carboxamide isomerase.